Here is a 154-residue protein sequence, read N- to C-terminus: uncharacterized protein (154 aa).

The protein localises to the mitochondrion. This is an uncharacterized protein from Arabidopsis thaliana (Mouse-ear cress).